The primary structure comprises 578 residues: Dapdiamide synthesis protein DdaD (578 aa).

Residues 498–573 (ESISATEHQI…KMAAWLDASS (76 aa)) form the Carrier domain. Ser533 bears the O-(pantetheine 4'-phosphoryl)serine mark.

It belongs to the ATP-dependent AMP-binding enzyme family. Pantetheine 4'-phosphate serves as cofactor.

It participates in antibiotic biosynthesis. Involved in dapdiamide antibiotics biosynthesis. Activates and sequesters N-beta-fumaramoyl-DAP as a covalently tethered thioester for subsequent oxidative modification of the fumaramoyl group. This chain is Dapdiamide synthesis protein DdaD, found in Enterobacter agglomerans (Erwinia herbicola).